A 565-amino-acid polypeptide reads, in one-letter code: Laccase-12 (565 aa).

The first 24 residues, 1–24 (MTTVHTFSILLFFCSLFSASLIIA), serve as a signal peptide directing secretion. 2 Plastocyanin-like domains span residues 32-148 (VIQE…PTPG) and 158-310 (RQTA…YKKT). N78 carries N-linked (GlcNAc...) asparagine glycosylation. Cu cation is bound by residues H82, H84, H127, and H129. N187, N203, N298, N325, N377, N387, N395, and N428 each carry an N-linked (GlcNAc...) asparagine glycan. The region spanning 413 to 549 (DFPSKPPVKF…AMAFLVDNGV (137 aa)) is the Plastocyanin-like 3 domain. 7 residues coordinate Cu cation: H466, H469, H471, H528, C529, H530, and H534.

This sequence belongs to the multicopper oxidase family. It depends on Cu cation as a cofactor. Predominantly expressed in the inflorescence stem.

The protein resides in the secreted. The protein localises to the extracellular space. Its subcellular location is the apoplast. The enzyme catalyses 4 hydroquinone + O2 = 4 benzosemiquinone + 2 H2O. Its function is as follows. Lignin degradation and detoxification of lignin-derived products. The sequence is that of Laccase-12 (LAC12) from Arabidopsis thaliana (Mouse-ear cress).